A 322-amino-acid polypeptide reads, in one-letter code: Phosphoserine phosphatase (322 aa).

Substrate is bound at residue 10-12 (PED). Mg(2+) is bound by residues D12, D116, and D118. D116 (nucleophile) is an active-site residue. D118 acts as the Proton donor in catalysis. Substrate contacts are provided by residues E125, R161, 204-205 (SG), and K249. D272 lines the Mg(2+) pocket. N275 serves as a coordination point for substrate.

Belongs to the HAD-like hydrolase superfamily. SerB family. It depends on Mg(2+) as a cofactor.

It carries out the reaction O-phospho-L-serine + H2O = L-serine + phosphate. The enzyme catalyses O-phospho-D-serine + H2O = D-serine + phosphate. It functions in the pathway amino-acid biosynthesis; L-serine biosynthesis; L-serine from 3-phospho-D-glycerate: step 3/3. In terms of biological role, catalyzes the dephosphorylation of phosphoserine (P-Ser). In Escherichia coli O157:H7, this protein is Phosphoserine phosphatase (serB).